The chain runs to 203 residues: Endo-type membrane-bound lytic murein transglycosylase A (203 aa).

A signal peptide spans 1–15 (MKLRWFAFLIVLLAG). The N-palmitoyl cysteine moiety is linked to residue cysteine 16. The S-diacylglycerol cysteine moiety is linked to residue cysteine 16.

It belongs to the transglycosylase Slt family.

The protein resides in the cell outer membrane. The catalysed reaction is Endolytic cleavage of the (1-&gt;4)-beta-glycosidic linkage between N-acetylmuramic acid (MurNAc) and N-acetylglucosamine (GlcNAc) residues in peptidoglycan with concomitant formation of a 1,6-anhydrobond in the MurNAc residue.. In terms of biological role, murein-degrading enzyme. May play a role in recycling of muropeptides during cell elongation and/or cell division. Preferentially cleaves at a distance of more than two disaccharide units from the ends of the glycan chain. This chain is Endo-type membrane-bound lytic murein transglycosylase A, found in Shigella boydii serotype 4 (strain Sb227).